Reading from the N-terminus, the 596-residue chain is Leucine-rich repeat and IQ domain-containing protein 4 (596 aa).

LRR repeat units follow at residues 22-44 (LPRL…LLRQ), 59-83 (LTDR…ILAL), 84-106 (KELE…IQQL), 108-129 (NTKV…LGAL), 130-152 (SSLE…VVSR), 153-176 (LRTL…ICKS), 177-200 (LHHL…IVNQ), 202-223 (KLRE…LCVL), 224-246 (YNLE…IGHL), 248-269 (RLQK…LSQC), 270-293 (SKLS…ELLT), 295-315 (LTEV…LCSW), 317-337 (SLHL…SFKR), 338-361 (LINL…ICAL), 362-384 (KNLE…ISLL), 385-407 (SNLK…IFSL), 410-433 (LEKL…IKRL), 434-457 (MNLK…GLMP), 459-479 (LEVL…ICRT), 480-502 (RNLR…LDHL), 504-525 (NLKV…VCNQ), and 527-549 (NEAI…TIQA). In terms of domain architecture, IQ spans 540 to 569 (RKMMATTIQAWWRGIMVRKGYGSYEELLKA). Positions 569–587 (ARKKGKSPPKDKKGKKAAK) are enriched in basic residues. The segment at 569–596 (ARKKGKSPPKDKKGKKAAKGKPEKGNKK) is disordered.

The sequence is that of Leucine-rich repeat and IQ domain-containing protein 4 (Lrriq4) from Mus musculus (Mouse).